Consider the following 402-residue polypeptide: Deoxyguanosinetriphosphate triphosphohydrolase-like protein (402 aa).

Residues 73 to 217 (RLTHTIEVAQ…AAIADDIAYN (145 aa)) enclose the HD domain.

The protein belongs to the dGTPase family. Type 2 subfamily.

The protein is Deoxyguanosinetriphosphate triphosphohydrolase-like protein of Brucella suis (strain ATCC 23445 / NCTC 10510).